A 545-amino-acid chain; its full sequence is Membrane protein insertase YidC (545 aa).

4 consecutive transmembrane segments (helical) span residues 350–370, 424–444, 461–481, and 498–518; these read IIGN…AVLY, LPML…FASV, ADPY…QTYL, and PLVF…YWVV.

The protein belongs to the OXA1/ALB3/YidC family. Type 1 subfamily. In terms of assembly, interacts with the Sec translocase complex via SecD. Specifically interacts with transmembrane segments of nascent integral membrane proteins during membrane integration.

The protein localises to the cell inner membrane. In terms of biological role, required for the insertion and/or proper folding and/or complex formation of integral membrane proteins into the membrane. Involved in integration of membrane proteins that insert both dependently and independently of the Sec translocase complex, as well as at least some lipoproteins. Aids folding of multispanning membrane proteins. The polypeptide is Membrane protein insertase YidC (Neisseria gonorrhoeae (strain NCCP11945)).